A 139-amino-acid chain; its full sequence is Putative nickel-responsive regulator (139 aa).

The Ni(2+) site is built by H79, H90, H92, and C98.

Belongs to the transcriptional regulatory CopG/NikR family. Ni(2+) serves as cofactor.

Transcriptional regulator. This chain is Putative nickel-responsive regulator, found in Geotalea uraniireducens (strain Rf4) (Geobacter uraniireducens).